The chain runs to 193 residues: Auxin-induced protein 22D (193 aa).

The tract at residues 16–68 is disordered; it reads ATELRLGLPGSDEPEKRATARSNKRSSPEASDEESISNGSDVTKEDNVVPPAK. The EAR-like (transcriptional repression) motif lies at 19–23; the sequence is LRLGL. In terms of domain architecture, PB1 spans 97 to 184; the sequence is GMYVKVSMAG…SCKRLRIMKG (88 aa).

It belongs to the Aux/IAA family. In terms of assembly, homodimers and heterodimers.

It is found in the nucleus. In terms of biological role, aux/IAA proteins are short-lived transcriptional factors that function as repressors of early auxin response genes at low auxin concentrations. Repression is thought to result from the interaction with auxin response factors (ARFs), proteins that bind to the auxin-responsive promoter element (AuxRE). Formation of heterodimers with ARF proteins may alter their ability to modulate early auxin response genes expression. This Vigna radiata var. radiata (Mung bean) protein is Auxin-induced protein 22D (AUX22D).